Here is a 315-residue protein sequence, read N- to C-terminus: Glutathione synthetase (315 aa).

One can recognise an ATP-grasp domain in the interval 125–310 (KLFTAWFSDL…ITGMLMDAIE (186 aa)). Arg-256 carries an N-beta-linked (GlcNAc) arginine glycan. Residues Glu-281 and Asn-283 each contribute to the Mg(2+) site.

It belongs to the prokaryotic GSH synthase family. Requires Mg(2+) as cofactor. The cofactor is Mn(2+). Post-translationally, glycosylation at Arg-256 by NleB enhances the glutathione synthetase activity, leading to an increase in glutathione production. Glycosylation may promote C.rodentium survival in oxidative stress conditions.

It carries out the reaction gamma-L-glutamyl-L-cysteine + glycine + ATP = glutathione + ADP + phosphate + H(+). It functions in the pathway sulfur metabolism; glutathione biosynthesis; glutathione from L-cysteine and L-glutamate: step 2/2. The polypeptide is Glutathione synthetase (Citrobacter rodentium).